The chain runs to 419 residues: tRNA(Ile)-lysidine synthase (419 aa).

25–30 (SGGIDS) is an ATP binding site.

It belongs to the tRNA(Ile)-lysidine synthase family.

It localises to the cytoplasm. The enzyme catalyses cytidine(34) in tRNA(Ile2) + L-lysine + ATP = lysidine(34) in tRNA(Ile2) + AMP + diphosphate + H(+). In terms of biological role, ligates lysine onto the cytidine present at position 34 of the AUA codon-specific tRNA(Ile) that contains the anticodon CAU, in an ATP-dependent manner. Cytidine is converted to lysidine, thus changing the amino acid specificity of the tRNA from methionine to isoleucine. In Actinobacillus pleuropneumoniae serotype 7 (strain AP76), this protein is tRNA(Ile)-lysidine synthase.